Here is a 304-residue protein sequence, read N- to C-terminus: MAPPVPAPSSDLPNIAPRDKAEILAQALPYIRKFHGKTLVIKYGGNAMTDPALQQDFAEDIVLLKLVGMNPVVVHGGGPQIDEALSRLGKKGTFIQGMRVTDEETMEVVEWVLGGEVQQDIVGLINAVGGKAVGLTGRDGGMIRARKLKMVDKDDPSIEHDVGQVGEITAIDPAVVKALQDDQFIPVVSPIGFGEHNESYNINADMVASKLATVLQAEKLMLLTNTPGVLDKAGKLLTNLSAREIDELFADGTISGGMLPKIAGALDAAKSGVNAVHIIDGRVPHAMLLEILSDQAYGTMIRSH.

Residues 77–78, arginine 99, and asparagine 201 each bind substrate; that span reads GG.

Belongs to the acetylglutamate kinase family. ArgB subfamily.

The protein localises to the cytoplasm. It catalyses the reaction N-acetyl-L-glutamate + ATP = N-acetyl-L-glutamyl 5-phosphate + ADP. It functions in the pathway amino-acid biosynthesis; L-arginine biosynthesis; N(2)-acetyl-L-ornithine from L-glutamate: step 2/4. Catalyzes the ATP-dependent phosphorylation of N-acetyl-L-glutamate. This Methylibium petroleiphilum (strain ATCC BAA-1232 / LMG 22953 / PM1) protein is Acetylglutamate kinase.